A 173-amino-acid chain; its full sequence is Gamma-crystallin S-1 (173 aa).

Beta/gamma crystallin 'Greek key' domains follow at residues 2-40 (GKII…RVES) and 41-83 (DWWV…RMLP). The segment at 84 to 88 (HTGRS) is connecting peptide. 2 consecutive Beta/gamma crystallin 'Greek key' domains span residues 89 to 129 (YRMR…QVMD) and 130 to 172 (GYWI…RRIM).

It belongs to the beta/gamma-crystallin family.

Functionally, crystallins are the dominant structural components of the vertebrate eye lens. The sequence is that of Gamma-crystallin S-1 (GS-1) from Chiloscyllium indicum (Slender bamboo shark).